A 265-amino-acid chain; its full sequence is MAAAALKRMRGPAQAKLLPGSAIQALVGLARPLVLALLLVSAALSSVVSRTDSPSPTVLNSHISTPNVNALTHENQTKPSISQISTTLPPTMSTEKSGGASVAPHPSPTPLSQEEADNNEDPSIEEEDLLMLNSSPSTAKDTLDNGDYGEPDYDWTTGPRDDDESDDTLEENRGYVEIEQSVKSFKMPSSNIEEEDSHFFFHLIIFAFCIAVVYITYHNKRKIFLLVQSRKWRDGLCSKTVEYHRLDQNVNEAMPSLKITNDYTF.

Positions 1 to 49 are cleaved as a signal peptide; the sequence is MAAAALKRMRGPAQAKLLPGSAIQALVGLARPLVLALLLVSAALSSVVS. Residues 50-196 are Extracellular-facing; it reads RTDSPSPTVL…MPSSNIEEED (147 aa). A compositionally biased stretch (polar residues) spans 72–96; it reads THENQTKPSISQISTTLPPTMSTEK. Disordered regions lie at residues 72-123 and 135-168; these read THEN…EDPS and SPST…SDDT. N-linked (GlcNAc...) asparagine glycosylation occurs at N75. The span at 114 to 123 shows a compositional bias: acidic residues; it reads EEADNNEDPS. Residues 197–217 traverse the membrane as a helical segment; it reads SHFFFHLIIFAFCIAVVYITY. At 218 to 265 the chain is on the cytoplasmic side; the sequence is HNKRKIFLLVQSRKWRDGLCSKTVEYHRLDQNVNEAMPSLKITNDYTF. 2 positions are modified to phosphoserine: S229 and S256.

It is found in the membrane. The sequence is that of Keratinocyte-associated transmembrane protein 2 (KCT2) from Pongo abelii (Sumatran orangutan).